The sequence spans 164 residues: Crossover junction endodeoxyribonuclease RuvC (164 aa).

Active-site residues include Asp-7, Glu-67, and Asp-140. The Mg(2+) site is built by Asp-7, Glu-67, and Asp-140.

This sequence belongs to the RuvC family. Homodimer which binds Holliday junction (HJ) DNA. The HJ becomes 2-fold symmetrical on binding to RuvC with unstacked arms; it has a different conformation from HJ DNA in complex with RuvA. In the full resolvosome a probable DNA-RuvA(4)-RuvB(12)-RuvC(2) complex forms which resolves the HJ. It depends on Mg(2+) as a cofactor.

The protein resides in the cytoplasm. The enzyme catalyses Endonucleolytic cleavage at a junction such as a reciprocal single-stranded crossover between two homologous DNA duplexes (Holliday junction).. Functionally, the RuvA-RuvB-RuvC complex processes Holliday junction (HJ) DNA during genetic recombination and DNA repair. Endonuclease that resolves HJ intermediates. Cleaves cruciform DNA by making single-stranded nicks across the HJ at symmetrical positions within the homologous arms, yielding a 5'-phosphate and a 3'-hydroxyl group; requires a central core of homology in the junction. The consensus cleavage sequence is 5'-(A/T)TT(C/G)-3'. Cleavage occurs on the 3'-side of the TT dinucleotide at the point of strand exchange. HJ branch migration catalyzed by RuvA-RuvB allows RuvC to scan DNA until it finds its consensus sequence, where it cleaves and resolves the cruciform DNA. This chain is Crossover junction endodeoxyribonuclease RuvC, found in Alkaliphilus oremlandii (strain OhILAs) (Clostridium oremlandii (strain OhILAs)).